Consider the following 387-residue polypeptide: Thermostable celloxylanase (387 aa).

Residues 41–382 enclose the GH10 domain; it reads AEDIPSLAEA…KPAFWAIVDP (342 aa). The active-site Proton donor is Glu185. Glu293 serves as the catalytic Nucleophile.

This sequence belongs to the glycosyl hydrolase 10 (cellulase F) family.

It catalyses the reaction Endohydrolysis of (1-&gt;4)-beta-D-glucosidic linkages in cellulose, lichenin and cereal beta-D-glucans.. The enzyme catalyses Endohydrolysis of (1-&gt;4)-beta-D-xylosidic linkages in xylans.. It participates in glycan degradation; xylan degradation. In terms of biological role, active toward xylan, carboxymethylcellulose, P-nitrophenyl-beta-D-xylopyranoside and P-nitrophenyl-beta-D-cellobioside. In Thermoclostridium stercorarium (Clostridium stercorarium), this protein is Thermostable celloxylanase (xynB).